The chain runs to 390 residues: MAATAASSLQIATRRPSMSSPSKILKAGTYIVGANPGNASWDKLSCTRQLSNLGCLRNHSAVPTCKRPFSFSTRAMSESSENKAPSGLPIDLRGKRAFIAGIADDNGYGWAIAKSLAAAGAEILVGTWVPALNIFETSLRRGKFDQSRVLPDGSLMEIKKVYALDAVFDNPEDVPEDVKTNKRYAGSSNWTVQEAAECVKKDFGSIDILVHSLANGPEVSKPLLETSRKGYLAAISASSYSFVSLLRHFLPIMNPGGASISLTYIASERIIPGYGGGMSSAKAALESDTRVLAYEAGRKSNIRVNTISAGPLGSRAAKAIGFIDTMIEYSYNNGPIQKTLTADEVGNAAAFLASPLASAITGATIYVDNGLNAMGVALDSPVFKDLNSKN.

A chloroplast-targeting transit peptide spans 1–74; the sequence is MAATAASSLQ…CKRPFSFSTR (74 aa). Positions 53 and 170 each coordinate NADP(+). The active-site Proton donor is the Ser239. Residues Lys282 and Ser314 each coordinate NADP(+). The active-site Lowers pKa of active site Tyr is Lys282.

It belongs to the short-chain dehydrogenases/reductases (SDR) family. FabI subfamily. In terms of assembly, homotetramer. In terms of tissue distribution, expressed in flowers and siliques and at lower levels in roots and leaves (at protein level).

The protein localises to the plastid. The protein resides in the chloroplast. It carries out the reaction a 2,3-saturated acyl-[ACP] + NAD(+) = a (2E)-enoyl-[ACP] + NADH + H(+). It participates in lipid metabolism; fatty acid biosynthesis. Inhibited by the phytotoxin cyperin and the synthetic antimicrobial compound triclosan. Catalyzes the NAD-dependent reduction of a carbon-carbon double bond in an enoyl moiety that is covalently linked to an acyl carrier protein (ACP). Catalyzes the last reduction step in the de novo synthesis cycle of fatty acids. Involved in the elongation cycle of fatty acids which are used in lipid metabolism. Required for normal plant growth. The chain is Enoyl-[acyl-carrier-protein] reductase [NADH], chloroplastic (MOD1) from Arabidopsis thaliana (Mouse-ear cress).